The following is a 483-amino-acid chain: Cobyric acid synthase (483 aa).

Residues 248 to 434 form the GATase cobBQ-type domain; it reads ALRVVVPVLP…LHGLFEQPSA (187 aa). Cys329 (nucleophile) is an active-site residue. His426 is a catalytic residue.

The protein belongs to the CobB/CobQ family. CobQ subfamily.

Its pathway is cofactor biosynthesis; adenosylcobalamin biosynthesis. Functionally, catalyzes amidations at positions B, D, E, and G on adenosylcobyrinic A,C-diamide. NH(2) groups are provided by glutamine, and one molecule of ATP is hydrogenolyzed for each amidation. The polypeptide is Cobyric acid synthase (Ectopseudomonas mendocina (strain ymp) (Pseudomonas mendocina)).